The chain runs to 93 residues: Small ribosomal subunit protein uS19 (93 aa).

This sequence belongs to the universal ribosomal protein uS19 family.

Functionally, protein S19 forms a complex with S13 that binds strongly to the 16S ribosomal RNA. This chain is Small ribosomal subunit protein uS19, found in Agathobacter rectalis (strain ATCC 33656 / DSM 3377 / JCM 17463 / KCTC 5835 / VPI 0990) (Eubacterium rectale).